The following is a 472-amino-acid chain: MDYLPLFADLKQRPVLIVGGGEVAARKIELLHRAGAQVWVVAQTLSSELEQQYQDGRIHWLAQDFLPEQLDNVFLVIAATNDTVLNAAVFAAADQRCILANVVDDQPLCSFIFPSIVDRSPLVVAISSSGQAPVLARILREKLEALLPTRLSDMAAIAGRWRGRVKQHMASMGERRRFWEHAFSGRFASLISRGQLTEAENELQLSLEGQHRALGEVALVGAGPGDAGLLTLRGLQVMQQADVVLYDHLVSPEVLDLVRRDAERICVGKRAGAHSVTQEATNQLLVTLAQQGKRVVRLKGGDPFIFGRGGEELQVVAQAGIPFQVVPGVTAAAGATAYAGIPLTHRDHAQSVTFITGHCRPDGDDLDWQTLARGRQTLAIYMGTVKAAAISQQLIAHGRSSTTPVAVIGRGTRVDQQVLIGTLAQLESLAQQAPTPALLVIGEVVNLHHQIAWFGQQPQTESAISPSVVNLA.

Residues 1–203 (MDYLPLFADL…GQLTEAENEL (203 aa)) are precorrin-2 dehydrogenase /sirohydrochlorin ferrochelatase. Residues 22–23 (EV) and 43–44 (QT) each bind NAD(+). Position 128 is a phosphoserine (serine 128). Positions 215-472 (GEVALVGAGP…AISPSVVNLA (258 aa)) are uroporphyrinogen-III C-methyltransferase. Proline 224 is an S-adenosyl-L-methionine binding site. The active-site Proton acceptor is the aspartate 247. The active-site Proton donor is lysine 269. S-adenosyl-L-methionine contacts are provided by residues 300 to 302 (GGD), isoleucine 305, 330 to 331 (TA), methionine 382, and glycine 411.

This sequence in the N-terminal section; belongs to the precorrin-2 dehydrogenase / sirohydrochlorin ferrochelatase family. In the C-terminal section; belongs to the precorrin methyltransferase family.

The catalysed reaction is uroporphyrinogen III + 2 S-adenosyl-L-methionine = precorrin-2 + 2 S-adenosyl-L-homocysteine + H(+). It catalyses the reaction precorrin-2 + NAD(+) = sirohydrochlorin + NADH + 2 H(+). The enzyme catalyses siroheme + 2 H(+) = sirohydrochlorin + Fe(2+). It functions in the pathway cofactor biosynthesis; adenosylcobalamin biosynthesis; precorrin-2 from uroporphyrinogen III: step 1/1. Its pathway is cofactor biosynthesis; adenosylcobalamin biosynthesis; sirohydrochlorin from precorrin-2: step 1/1. It participates in porphyrin-containing compound metabolism; siroheme biosynthesis; precorrin-2 from uroporphyrinogen III: step 1/1. The protein operates within porphyrin-containing compound metabolism; siroheme biosynthesis; siroheme from sirohydrochlorin: step 1/1. It functions in the pathway porphyrin-containing compound metabolism; siroheme biosynthesis; sirohydrochlorin from precorrin-2: step 1/1. Its function is as follows. Multifunctional enzyme that catalyzes the SAM-dependent methylations of uroporphyrinogen III at position C-2 and C-7 to form precorrin-2 via precorrin-1. Then it catalyzes the NAD-dependent ring dehydrogenation of precorrin-2 to yield sirohydrochlorin. Finally, it catalyzes the ferrochelation of sirohydrochlorin to yield siroheme. The chain is Siroheme synthase 1 from Yersinia pestis bv. Antiqua (strain Nepal516).